Consider the following 464-residue polypeptide: GDNF family receptor alpha-2 (464 aa).

Positions 1 to 21 (MILANAFCLFFFLDETLRSLA) are cleaved as a signal peptide. 14 cysteine pairs are disulfide-bonded: C40–C93, C47–C53, C63–C78, C95–C105, C161–C222, C168–C174, C185–C200, C195–C241, C224–C229, C251–C323, C258–C264, C275–C293, C285–C347, and C325–C335. N52 carries an N-linked (GlcNAc...) asparagine glycan. N357 carries N-linked (GlcNAc...) asparagine glycosylation. The disordered stretch occupies residues 363–392 (MSPKGPTFSATQAPRVEKTPSLPDDLSDST). Positions 381–392 (TPSLPDDLSDST) are enriched in low complexity. N413 carries N-linked (GlcNAc...) asparagine glycosylation. Residue S443 is the site of GPI-anchor amidated serine attachment. Positions 444 to 464 (CRARLSTALTALPLLMVTLAQ) are cleaved as a propeptide — removed in mature form.

This sequence belongs to the GDNFR family. In terms of assembly, interacts with NRTN ligand and RET: forms a 2:2:2 ternary complex composed of NRTN ligand, GFRA2 and RET receptor. Also forms a 4:4:4 tetrameric complex composed of 4 copies of NRTN ligand, GFRA2 and RET receptor, which prevents endocytosis of RET. Interacts with SORL1. In terms of tissue distribution, neurons of the superior cervical and dorsal root ganglia, and adult brain and testis. Low level in the substantia nigra, spleen and adrenal gland. Isoform 1, isoform 2 and isoform 3 are all expressed in brain, liver, ileum, spleen, heart and kidney. In brain, isoform 1 is most abundant, isoform 2 slightly less and isoform 3 is lowest. No significant levels of isoform 1, isoform 2 or isoform 3 expression in testis.

The protein localises to the cell membrane. Functionally, receptor for neurturin (NRTN), a growth factor that supports the survival of sympathetic neurons. NRTN-binding leads to autophosphorylation and activation of the RET receptor. Also able to mediate GDNF signaling through the RET tyrosine kinase receptor. Its function is as follows. Participates in NRTN-induced 'Ser-727' phosphorylation of STAT3. This Mus musculus (Mouse) protein is GDNF family receptor alpha-2.